The chain runs to 149 residues: Glycophorin-A (149 aa).

Residues 1 to 19 (MYGKIIFVLLLSAIVSISA) form the signal peptide. Residues 20-90 (SSTTEVAMHT…QLVHRFSEPE (71 aa)) are Extracellular-facing. Residue Ser-21 is glycosylated (O-linked (GalNAc...) serine). O-linked (GalNAc...) threonine glycans are attached at residues Thr-22, Thr-23, and Thr-29. O-linked (GalNAc...) serine glycosylation occurs at Ser-30. An O-linked (GalNAc...) threonine glycan is attached at Thr-31. Ser-32 carries an O-linked (GalNAc...) serine glycan. The O-linked (GalNAc...) threonine glycan is linked to Thr-35. O-linked (GalNAc...) serine glycans are attached at residues Ser-37 and Ser-40. O-linked (GalNAc...) threonine glycosylation occurs at Thr-43. O-linked (GalNAc...) serine glycosylation is present at Ser-44. Residues Thr-51 and Thr-55 are each glycosylated (O-linked (GalNAc...) threonine). Ser-62 carries O-linked (GalNAc...) serine glycosylation. Residue Thr-68 is glycosylated (O-linked (GalNAc...) threonine). The chain crosses the membrane as a helical span at residues 91 to 113 (ITLIIFGVMAGVIGTILLIYYSI). Residues 114 to 149 (RRLIKKSPSDVKPLPSPDTDVPLSSVEIENPETSDQ) lie on the Cytoplasmic side of the membrane. Residues 122-149 (SDVKPLPSPDTDVPLSSVEIENPETSDQ) form a disordered region. Phosphoserine is present on residues Ser-137 and Ser-147.

Belongs to the glycophorin-A family. As to quaternary structure, homodimer. Component of the ankyrin-1 complex in the erythrocyte, composed of ANK1, RHCE, RHAG, SLC4A1, EPB42, GYPA, GYPB and AQP1. Interacts with SLC4A1; a GYPA monomer is bound at each end of the SLC4A1 dimer forming a heterotetramer.

It is found in the cell membrane. Its function is as follows. Component of the ankyrin-1 complex, a multiprotein complex involved in the stability and shape of the erythrocyte membrane. Glycophorin A is the major intrinsic membrane protein of the erythrocyte. The N-terminal glycosylated segment, which lies outside the erythrocyte membrane, has MN blood group receptors. Appears to be important for the function of SLC4A1 and is required for high activity of SLC4A1. May be involved in translocation of SLC4A1 to the plasma membrane. The sequence is that of Glycophorin-A from Pan troglodytes (Chimpanzee).